The primary structure comprises 182 residues: Small ribosomal subunit protein uS4c (182 aa).

The segment at 12–31 (PGFTSKRPRSGSDLKNPLRS) is disordered. An S4 RNA-binding domain is found at 82 to 143 (MRLDNILFRL…KQRSKALIQN (62 aa)).

The protein belongs to the universal ribosomal protein uS4 family. Part of the 30S ribosomal subunit. Contacts protein S5. The interaction surface between S4 and S5 is involved in control of translational fidelity.

The protein resides in the plastid. It localises to the chloroplast. Functionally, one of the primary rRNA binding proteins, it binds directly to 16S rRNA where it nucleates assembly of the body of the 30S subunit. In terms of biological role, with S5 and S12 plays an important role in translational accuracy. The polypeptide is Small ribosomal subunit protein uS4c (rps4) (Hymenocallis littoralis (Beach spider-lily)).